A 467-amino-acid chain; its full sequence is MLKIYDTLTRSRREFIPLTPGKVKMYVCGMTVYDHCHLGHARVLVVFDSVVRWLQTLDYEVTYVRNITDIDDKIIRRALENHEPFGALTARYIQAMEEDAAALGIISPSFEPRATECIESMVTMIESLLSKGLAYVANNGDVFYDVRRFPGYGKLSGKSLDDLRAGERVEIDTNKRDPLDFVLWKAAKPDEPSWDSPWGKGRPGWHIECSAMSGHYLGERFDIHGGGQDLQFPHHENEIAQSEGVHGHPHVNYWMHNGFVRVDNEKMSKSLGNFFTVREVLARYQPEVVRFFIVRAHYRSPLNYSDAHLNDARNALERLYTALKNHAPSQAQAAEEATATIDWVNDGYAQRFMAAMNDDFNTPEAVAVLFDLASEANRTGNSHYASLLKALGGILGLLQQSPRQYLQHPAHPQNDHHSIEEIERMIQQRLQARKEKNFAQADALRQQLAEAGIILEDGPQGTTWRRQ.

Cys-28 is a Zn(2+) binding site. The 'HIGH' region signature appears at 30–40 (MTVYDHCHLGH). Zn(2+)-binding residues include Cys-209, His-234, and Glu-238. The short motif at 266 to 270 (KMSKS) is the 'KMSKS' region element. Lys-269 is a binding site for ATP.

Belongs to the class-I aminoacyl-tRNA synthetase family. Monomer. It depends on Zn(2+) as a cofactor.

It localises to the cytoplasm. The enzyme catalyses tRNA(Cys) + L-cysteine + ATP = L-cysteinyl-tRNA(Cys) + AMP + diphosphate. The polypeptide is Cysteine--tRNA ligase (Nitrosomonas eutropha (strain DSM 101675 / C91 / Nm57)).